A 286-amino-acid polypeptide reads, in one-letter code: Alpha-ketoglutarate-dependent dioxygenase alkB homolog 3 (286 aa).

The interval 21–45 is disordered; it reads QAIAQPATTAKSHLHQKPGQTWKNK. The span at 22–31 shows a compositional bias: polar residues; it reads AIAQPATTAK. Residues W115 and 141–143 contribute to the substrate site; that span reads YTY. In terms of domain architecture, Fe2OG dioxygenase spans 172-278; it reads TFNSLLCNLY…RVNLTFRTVY (107 aa). L177 is modified ((4R)-5-hydroxyleucine; alternate). At L177 the chain carries (4R)-5-oxoleucine; alternate. 179-181 contributes to the 2-oxoglutarate binding site; sequence NLY. Positions 191 and 193 each coordinate Fe cation. D194 serves as a coordination point for substrate. A Fe cation-binding site is contributed by H257. 2-oxoglutarate is bound by residues 269 to 275 and R275; that span reads RVNLTFR.

This sequence belongs to the alkB family. Interacts with the ASCC complex composed of ASCC1, ASCC2 and ASCC3. Interacts directly with ASCC3, and is thereby recruited to the ASCC complex. Interacts with OTUD4; the interaction is direct. Interacts with USP7 and USP9X. Requires Fe(2+) as cofactor. Post-translationally, ubiquitinated; undergoes 'Lys-48'-linked polyubiquitination. OTUD4 promotes USP7 and USP9X-dependent deubiquitination of 'Lys-48'-polyubiquitinated ALKBH3 promoting the repair of alkylated DNA lesions. As to expression, ubiquitous. Detected in heart, pancreas, skeletal muscle, thymus, testis, ovary, spleen, prostate, small intestine, peripheral blood leukocytes, urinary bladder and colon.

It localises to the nucleus. Its subcellular location is the cytoplasm. The catalysed reaction is an N(1)-methyladenosine in mRNA + 2-oxoglutarate + O2 = an adenosine in mRNA + formaldehyde + succinate + CO2. It catalyses the reaction a methylated nucleobase within DNA + 2-oxoglutarate + O2 = a nucleobase within DNA + formaldehyde + succinate + CO2. It carries out the reaction an N(1)-methyl-2'-deoxyadenosine in single-stranded DNA + 2-oxoglutarate + O2 = a 2'-deoxyadenosine in single-stranded DNA + formaldehyde + succinate + CO2 + H(+). The enzyme catalyses an N(3)-methyl-2'-deoxycytidine in single-stranded DNA + 2-oxoglutarate + O2 = a 2'-deoxycytidine in single-stranded DNA + formaldehyde + succinate + CO2 + H(+). The catalysed reaction is a 3,N(4)-etheno-2'-deoxycytidine in single-stranded DNA + 2-oxoglutarate + O2 + H2O = a 2'-deoxycytidine in single-stranded DNA + glyoxal + succinate + CO2. Its activity is regulated as follows. Activated by ascorbate. Dioxygenase that mediates demethylation of DNA and RNA containing 1-methyladenosine (m1A). Repairs alkylated DNA containing 1-methyladenosine (m1A) and 3-methylcytosine (m3C) by oxidative demethylation. Has a strong preference for single-stranded DNA. Able to process alkylated m3C within double-stranded regions via its interaction with ASCC3, which promotes DNA unwinding to generate single-stranded substrate needed for ALKBH3. Can repair exocyclic 3,N4-ethenocytosine adducs in single-stranded DNA. Also acts on RNA. Demethylates N(1)-methyladenosine (m1A) RNA, an epigenetic internal modification of messenger RNAs (mRNAs) highly enriched within 5'-untranslated regions (UTRs) and in the vicinity of start codons. Requires molecular oxygen, alpha-ketoglutarate and iron. In Homo sapiens (Human), this protein is Alpha-ketoglutarate-dependent dioxygenase alkB homolog 3.